Reading from the N-terminus, the 953-residue chain is Translation initiation factor IF-2 (953 aa).

Disordered stretches follow at residues 48-212 (SSFS…KIDF) and 279-367 (TKLK…FHEL). Basic and acidic residues-rich tracts occupy residues 80-89 (TGSEHVEKTQ), 98-111 (FKAEREARAKEQAA), and 140-188 (QGDK…ENHK). Polar residues-rich tracts occupy residues 191–207 (RFTNQKKQGRQEPQSKS) and 282–291 (KSSNISAKST). Positions 300-317 (ARPEKNRELTHHSQEGQK) are enriched in basic and acidic residues. The segment covering 322–338 (SWNSQNQVRNQKNSNWN) has biased composition (low complexity). The segment covering 339 to 348 (KNKKTKKGKN) has biased composition (basic residues). The tr-type G domain maps to 454–623 (ERAPVVTIMG…LLVAEVEELK (170 aa)). A G1 region spans residues 463–470 (GHVDHGKT). 463–470 (GHVDHGKT) lines the GTP pocket. The G2 stretch occupies residues 488–492 (GITQH). Positions 509 to 512 (DTPG) are G3. GTP is bound by residues 509-513 (DTPGH) and 563-566 (NKID). Residues 563–566 (NKID) are G4. A G5 region spans residues 599–601 (SAK).

This sequence belongs to the TRAFAC class translation factor GTPase superfamily. Classic translation factor GTPase family. IF-2 subfamily.

It is found in the cytoplasm. Functionally, one of the essential components for the initiation of protein synthesis. Protects formylmethionyl-tRNA from spontaneous hydrolysis and promotes its binding to the 30S ribosomal subunits. Also involved in the hydrolysis of GTP during the formation of the 70S ribosomal complex. The chain is Translation initiation factor IF-2 from Streptococcus pyogenes serotype M3 (strain ATCC BAA-595 / MGAS315).